The sequence spans 126 residues: Large ribosomal subunit protein bL12 (126 aa).

It belongs to the bacterial ribosomal protein bL12 family. As to quaternary structure, homodimer. Part of the ribosomal stalk of the 50S ribosomal subunit. Forms a multimeric L10(L12)X complex, where L10 forms an elongated spine to which 2 to 4 L12 dimers bind in a sequential fashion. Binds GTP-bound translation factors.

Forms part of the ribosomal stalk which helps the ribosome interact with GTP-bound translation factors. Is thus essential for accurate translation. In Bordetella petrii (strain ATCC BAA-461 / DSM 12804 / CCUG 43448), this protein is Large ribosomal subunit protein bL12.